We begin with the raw amino-acid sequence, 318 residues long: Probable cell division protein WhiA (318 aa).

The segment at residues Ser281–Lys314 is a DNA-binding region (H-T-H motif).

Belongs to the WhiA family.

In terms of biological role, involved in cell division and chromosome segregation. The protein is Probable cell division protein WhiA of Clostridium tetani (strain Massachusetts / E88).